Here is a 131-residue protein sequence, read N- to C-terminus: uncharacterized protein (131 aa).

A disordered region spans residues 16–71; it reads MSEQERDEVLEDDDDDEDNKSSQQERDEFVEDDDNNSIQSSPSCAQPLLTQYHDDG. Residues 20-33 are compositionally biased toward acidic residues; sequence ERDEVLEDDDDDED.

This is an uncharacterized protein from Dictyostelium discoideum (Social amoeba).